The chain runs to 554 residues: Undecaprenyl phosphate-alpha-4-amino-4-deoxy-L-arabinose arabinosyl transferase (554 aa).

11 helical membrane passes run 4–24 (LKDS…LLPV), 87–107 (FGSI…ATLL), 115–135 (VLAT…TYAV), 178–198 (FMTK…PIVI), 206–226 (LVVF…PWAL), 262–282 (YLPI…GALF), 293–313 (ELFF…VAKG), 315–335 (LPTY…AYAT), 351–371 (VINL…GLGL), 384–404 (QKVW…FITL), and 414–434 (AAAC…QQVV).

The protein belongs to the glycosyltransferase 83 family.

The protein resides in the cell inner membrane. The enzyme catalyses 4-amino-4-deoxy-alpha-L-arabinopyranosyl di-trans,octa-cis-undecaprenyl phosphate + lipid IVA = lipid IIA + di-trans,octa-cis-undecaprenyl phosphate.. It functions in the pathway lipopolysaccharide metabolism; 4-amino-4-deoxy-beta-L-arabinose-lipid A biosynthesis. Its function is as follows. Catalyzes the transfer of the L-Ara4N moiety of the glycolipid undecaprenyl phosphate-alpha-L-Ara4N to lipid A. The modified arabinose is attached to lipid A and is required for resistance to polymyxin and cationic antimicrobial peptides. In Yersinia pseudotuberculosis serotype O:3 (strain YPIII), this protein is Undecaprenyl phosphate-alpha-4-amino-4-deoxy-L-arabinose arabinosyl transferase.